A 182-amino-acid chain; its full sequence is Kappa-casein (182 aa).

An N-terminal signal peptide occupies residues 1–20 (MKSFLLVVNALALTLPFLAV). T133, T143, T148, and T151 each carry an O-linked (GalNAc...) threonine glycan. A Phosphothreonine; alternate modification is found at T157. T157 carries an O-linked (GalNAc...) threonine; alternate glycan. O-linked (GalNAc...) threonine glycosylation is found at T167, T169, and T178.

Belongs to the kappa-casein family. In terms of assembly, heteromultimers composed of alpha-s1 casein and kappa casein linked by disulfide bonds. Post-translationally, the N-terminus is blocked. In terms of tissue distribution, mammary gland specific. Secreted in milk.

The protein localises to the secreted. In terms of biological role, kappa-casein stabilizes micelle formation, preventing casein precipitation in milk. The polypeptide is Kappa-casein (CSN3) (Homo sapiens (Human)).